Here is a 630-residue protein sequence, read N- to C-terminus: Chaperone protein HtpG (630 aa).

The segment at 1-336 (MTTTVEQTAE…TADLPLNVSR (336 aa)) is a; substrate-binding. A b region spans residues 337 to 551 (EMIQESPILA…EDGYDRQMEK (215 aa)). The tract at residues 552–630 (ILQNAGRLQG…VFERSVRSEG (79 aa)) is c.

Belongs to the heat shock protein 90 family. In terms of assembly, homodimer.

It localises to the cytoplasm. Its function is as follows. Molecular chaperone. Has ATPase activity. The polypeptide is Chaperone protein HtpG (Rhizobium etli (strain ATCC 51251 / DSM 11541 / JCM 21823 / NBRC 15573 / CFN 42)).